A 73-amino-acid chain; its full sequence is Large ribosomal subunit protein bL31 (73 aa).

Zn(2+) contacts are provided by Cys-16, Cys-18, Cys-37, and Cys-40.

Belongs to the bacterial ribosomal protein bL31 family. Type A subfamily. As to quaternary structure, part of the 50S ribosomal subunit. Zn(2+) serves as cofactor.

Its function is as follows. Binds the 23S rRNA. The polypeptide is Large ribosomal subunit protein bL31 (Blochmanniella floridana).